We begin with the raw amino-acid sequence, 503 residues long: ATP synthase subunit alpha (503 aa).

170–177 is a binding site for ATP; sequence GDRQTGKT.

The protein belongs to the ATPase alpha/beta chains family. As to quaternary structure, F-type ATPases have 2 components, CF(1) - the catalytic core - and CF(0) - the membrane proton channel. CF(1) has five subunits: alpha(3), beta(3), gamma(1), delta(1), epsilon(1). CF(0) has three main subunits: a(1), b(2) and c(9-12). The alpha and beta chains form an alternating ring which encloses part of the gamma chain. CF(1) is attached to CF(0) by a central stalk formed by the gamma and epsilon chains, while a peripheral stalk is formed by the delta and b chains.

Its subcellular location is the cell inner membrane. The enzyme catalyses ATP + H2O + 4 H(+)(in) = ADP + phosphate + 5 H(+)(out). Produces ATP from ADP in the presence of a proton gradient across the membrane. The alpha chain is a regulatory subunit. This chain is ATP synthase subunit alpha, found in Pseudothermotoga lettingae (strain ATCC BAA-301 / DSM 14385 / NBRC 107922 / TMO) (Thermotoga lettingae).